The following is a 404-amino-acid chain: Sodium/glutamate symporter (404 aa).

The next 11 helical transmembrane spans lie at 5–25 (FSTY…YFLV), 33–53 (TFNI…LLIW), 69–89 (TTMM…SRLI), 95–115 (LVVF…IGIA), 161–181 (IAIA…GPVA), 219–239 (SLIE…YLDV), 245–265 (ALQL…RNIL), 277–297 (AIDV…LMSL), 307–327 (IDVL…AIFI), 338–358 (AVVL…TAIA), and 373–393 (AFLI…AALL).

This sequence belongs to the glutamate:Na(+) symporter (ESS) (TC 2.A.27) family.

The protein localises to the cell inner membrane. Catalyzes the sodium-dependent transport of glutamate. The polypeptide is Sodium/glutamate symporter (Haemophilus influenzae (strain ATCC 51907 / DSM 11121 / KW20 / Rd)).